The following is a 396-amino-acid chain: Elongation factor Tu 1 (396 aa).

Residues Lys-10–Glu-206 enclose the tr-type G domain. The interval Gly-19–Thr-26 is G1. GTP is bound at residue Gly-19–Thr-26. Thr-26 contributes to the Mg(2+) binding site. The tract at residues Gly-60–Asn-64 is G2. The segment at Asp-81–Gly-84 is G3. GTP-binding positions include Asp-81 to His-85 and Asn-136 to Asp-139. Residues Asn-136 to Asp-139 form a G4 region. Residues Ser-174–Leu-176 form a G5 region.

The protein belongs to the TRAFAC class translation factor GTPase superfamily. Classic translation factor GTPase family. EF-Tu/EF-1A subfamily. Monomer.

It localises to the cytoplasm. The catalysed reaction is GTP + H2O = GDP + phosphate + H(+). Its function is as follows. GTP hydrolase that promotes the GTP-dependent binding of aminoacyl-tRNA to the A-site of ribosomes during protein biosynthesis. The polypeptide is Elongation factor Tu 1 (Hyphomonas neptunium (strain ATCC 15444)).